The sequence spans 75 residues: uncharacterized protein (75 aa).

This is an uncharacterized protein from Mycobacterium tuberculosis (strain CDC 1551 / Oshkosh).